The primary structure comprises 516 residues: MAAAWLVVLLTVHRLLHLSGVSAVDRSQFPPDFLFGTSSSAYQVEGGYLEGNKGLSNWDVFTHKQGTIEDGSNGDTANDHYHRYMEDIELMHSLGVNSYRFSISWARILPKGRFGDVNPDGVAFYNALIDGLVQKGIQPFVTICHYDIPHELDERYGGWLSPEIQKDFSYFAEVCFKLFGDRIKFWTTFNQPNLSIKFSYMDGFYSPGRCSEPFGKCALGNSSIEPYVAGHNIILSHANAVSVYRNKYQGKQGGQIGIALSITWYEPFRNTTIDLLAVKRALSFGASWFLDPILLGDYPTEMREVLGQSLPKFTSKQKNRLQSTKLDFIGLNHYTTCYVKDCIFSPCEIDPVNADARVFSLYERDGVPIGKATGAPFFHDVPRGMEEAVTYYKQRYNNTPTYITENGYSQASNSNMTAKDFTNDTGRITYIQGYLISLASAIRKGADVRGYFVWSLLDDFEWNFGYTLRFGLYHVHYKTLKRTPKLSVDWYRKFLTGSLLRRKFRDESQLHKFNSY.

The signal sequence occupies residues 1 to 23; it reads MAAAWLVVLLTVHRLLHLSGVSA. Residues Gln-43, His-145, and 190-191 contribute to the a beta-D-glucoside site; that span reads NQ. The N-linked (GlcNAc...) asparagine glycan is linked to Asn-193. Residues Cys-210 and Cys-217 are joined by a disulfide bond. Residues Asn-221 and Asn-270 are each glycosylated (N-linked (GlcNAc...) asparagine). Residue Tyr-334 coordinates a beta-D-glucoside. Cys-342 and Cys-347 are disulfide-bonded. Glu-405 contributes to the a beta-D-glucoside binding site. Glu-405 acts as the Nucleophile in catalysis. N-linked (GlcNAc...) asparagine glycosylation is found at Asn-415 and Asn-423. A beta-D-glucoside contacts are provided by residues Trp-454, 461 to 462, and Phe-470; that span reads EW.

The protein belongs to the glycosyl hydrolase 1 family. Expressed in flowers and endosperm.

This Oryza sativa subsp. japonica (Rice) protein is Probable inactive beta-glucosidase 14.